A 142-amino-acid polypeptide reads, in one-letter code: Small ribosomal subunit protein uS12 (142 aa).

This sequence belongs to the universal ribosomal protein uS12 family. Part of the 30S ribosomal subunit.

In terms of biological role, with S4 and S5 plays an important role in translational accuracy. Located at the interface of the 30S and 50S subunits. This Archaeoglobus fulgidus (strain ATCC 49558 / DSM 4304 / JCM 9628 / NBRC 100126 / VC-16) protein is Small ribosomal subunit protein uS12.